Here is a 305-residue protein sequence, read N- to C-terminus: Acetaldehyde dehydrogenase (305 aa).

The Acyl-thioester intermediate role is filled by C130. NAD(+)-binding positions include 161–169 and N272; that span reads SVGPGTRKN.

Belongs to the acetaldehyde dehydrogenase family.

The catalysed reaction is acetaldehyde + NAD(+) + CoA = acetyl-CoA + NADH + H(+). The sequence is that of Acetaldehyde dehydrogenase from Leptothrix cholodnii (strain ATCC 51168 / LMG 8142 / SP-6) (Leptothrix discophora (strain SP-6)).